Consider the following 264-residue polypeptide: Regulatory protein RecX (264 aa).

The protein belongs to the RecX family.

The protein localises to the cytoplasm. Functionally, modulates RecA activity. The chain is Regulatory protein RecX from Limosilactobacillus reuteri (strain DSM 20016) (Lactobacillus reuteri).